The following is a 269-amino-acid chain: Meiotic drive suppressor wtf5 (269 aa).

Residues 1 to 67 form a disordered region; sequence MKNNHTSLKS…HRENHSYRTT (67 aa). Over residues 19 to 30 the composition is skewed to basic and acidic residues; that stretch reads KTDHEIDLEKGP. The next 5 membrane-spanning stretches (helical) occupy residues 73–93, 110–130, 140–160, 174–194, and 216–236; these read LLIK…PAVC, WTLF…LTYF, VTVI…AQCV, WENM…VGSP, and IIFV…PGSI.

It belongs to the WTF family. As to quaternary structure, homomer. Interacts with other proteins that exhibit high sequence similarity.

It localises to the spore membrane. It is found in the vacuole membrane. Acts as a suppressor component of the dual wtf meiotic drive system, and can suppress but not confer meiotic drive by compatible poisons. Wtf meiotic drive systems promote unequal transmission of alleles from the parental zygote to progeny spores by encoding a poison and an antidote from the same locus; the poison is trans-acting and forms toxic aggregates in all spores within an ascus, wherease the antidote is spore-specific and targets aggregates for degradation by the vacuole. Meiotic drive by wtf systems therefore lead to poisoning of all progeny that do not inherit the dual poison/antidote allele, or express a compatible antidote. This is Meiotic drive suppressor wtf5 from Schizosaccharomyces kambucha (Fission yeast).